Consider the following 150-residue polypeptide: Cytochrome c oxidase subunit 5A, mitochondrial (150 aa).

The transit peptide at methionine 1–residue 41 directs the protein to the mitochondrion. An SIFI-degron motif is present at residues leucine 2–alanine 17. N6-acetyllysine is present on residues lysine 87 and lysine 113. The residue at position 141 (threonine 141) is a Phosphothreonine.

Belongs to the cytochrome c oxidase subunit 5A family. Component of the cytochrome c oxidase (complex IV, CIV), a multisubunit enzyme composed of 14 subunits. The complex is composed of a catalytic core of 3 subunits MT-CO1, MT-CO2 and MT-CO3, encoded in the mitochondrial DNA, and 11 supernumerary subunits COX4I, COX5A, COX5B, COX6A, COX6B, COX6C, COX7A, COX7B, COX7C, COX8 and NDUFA4, which are encoded in the nuclear genome. The complex exists as a monomer or a dimer and forms supercomplexes (SCs) in the inner mitochondrial membrane with NADH-ubiquinone oxidoreductase (complex I, CI) and ubiquinol-cytochrome c oxidoreductase (cytochrome b-c1 complex, complex III, CIII), resulting in different assemblies (supercomplex SCI(1)III(2)IV(1) and megacomplex MCI(2)III(2)IV(2)). Interacts with AFG1L. Interacts with RAB5IF. In response to mitochondrial stress, the precursor protein is ubiquitinated by the SIFI complex in the cytoplasm before mitochondrial import, leading to its degradation. Within the SIFI complex, UBR4 initiates ubiquitin chain that are further elongated or branched by KCMF1.

The protein localises to the mitochondrion inner membrane. It functions in the pathway energy metabolism; oxidative phosphorylation. Component of the cytochrome c oxidase, the last enzyme in the mitochondrial electron transport chain which drives oxidative phosphorylation. The respiratory chain contains 3 multisubunit complexes succinate dehydrogenase (complex II, CII), ubiquinol-cytochrome c oxidoreductase (cytochrome b-c1 complex, complex III, CIII) and cytochrome c oxidase (complex IV, CIV), that cooperate to transfer electrons derived from NADH and succinate to molecular oxygen, creating an electrochemical gradient over the inner membrane that drives transmembrane transport and the ATP synthase. Cytochrome c oxidase is the component of the respiratory chain that catalyzes the reduction of oxygen to water. Electrons originating from reduced cytochrome c in the intermembrane space (IMS) are transferred via the dinuclear copper A center (CU(A)) of subunit 2 and heme A of subunit 1 to the active site in subunit 1, a binuclear center (BNC) formed by heme A3 and copper B (CU(B)). The BNC reduces molecular oxygen to 2 water molecules using 4 electrons from cytochrome c in the IMS and 4 protons from the mitochondrial matrix. This chain is Cytochrome c oxidase subunit 5A, mitochondrial (COX5A), found in Pan paniscus (Pygmy chimpanzee).